Here is a 450-residue protein sequence, read N- to C-terminus: Phosphoglucosamine mutase (450 aa).

The active-site Phosphoserine intermediate is Ser-101. Mg(2+) is bound by residues Ser-101, Asp-240, Asp-242, and Asp-244. At Ser-101 the chain carries Phosphoserine.

This sequence belongs to the phosphohexose mutase family. Requires Mg(2+) as cofactor. In terms of processing, activated by phosphorylation.

The catalysed reaction is alpha-D-glucosamine 1-phosphate = D-glucosamine 6-phosphate. Functionally, catalyzes the conversion of glucosamine-6-phosphate to glucosamine-1-phosphate. This is Phosphoglucosamine mutase from Streptococcus equi subsp. equi (strain 4047).